The sequence spans 297 residues: Mitochondrial glycine transporter (297 aa).

Solcar repeat units follow at residues 5–81 (TGHL…MRTA), 105–189 (LSMY…LKHT), and 211–295 (TSTA…LIKH). 6 helical membrane-spanning segments follow: residues 8–33 (LIGG…TRFQ), 56–82 (GTLP…RTAL), 111–136 (LVTG…VRYE), 164–187 (GFGP…EKLK), 215–241 (INST…KTRM), and 270–288 (GLSM…AWGI).

The protein belongs to the mitochondrial carrier (TC 2.A.29) family. SLC25A38 subfamily.

It localises to the mitochondrion inner membrane. It catalyses the reaction glycine(in) = glycine(out). Its function is as follows. Mitochondrial glycine transporter that imports glycine into the mitochondrial matrix. Plays an important role in providing glycine for the first enzymatic step in heme biosynthesis, the condensation of glycine with succinyl-CoA to produce 5-aminolevulinate (ALA) in the mitochondrial matrix. The sequence is that of Mitochondrial glycine transporter from Candida glabrata (strain ATCC 2001 / BCRC 20586 / JCM 3761 / NBRC 0622 / NRRL Y-65 / CBS 138) (Yeast).